The sequence spans 249 residues: Probable transcriptional regulatory protein Sfum_0996 (249 aa).

The protein belongs to the TACO1 family.

The protein resides in the cytoplasm. The polypeptide is Probable transcriptional regulatory protein Sfum_0996 (Syntrophobacter fumaroxidans (strain DSM 10017 / MPOB)).